A 78-amino-acid polypeptide reads, in one-letter code: MSRLITLQDWAKEEFGDLAPSERVLKKYAQGKMMAPPAIKVGRYWMIDRNSRFVGTLAEPQLPINANPKLQRIIADGC.

Functionally, excisionase and integrase are necessary for the excision of prophage from the host genome by site-specific recombination at the att site. This Enterobacteria phage P21 (Bacteriophage 21) protein is Excisionase (xis).